A 507-amino-acid polypeptide reads, in one-letter code: MEKSISSISKASMNSDEKLDKKEWDQQLPIDFGEGEDVTTEVYILDHKAERRLCRKFDFRILPLLALLYLFNALDKSNVSNAKTNGMDKDLGFVGDQYNIMISIFYIPFVLCAFPFSYLYKRFGAARILPFFMLSFGAMSLCQAAVKNFGGMMAVRWFLGMAESAVLPGVVYYLTTFYRRTELARRLAIFYAAANVSSAFGGLLAYGVFHIKGGKLQGWQYLFLIEGGVTFLCAIVIFLVLPVSVETANFLTDEEKTLAKMRIENDSSSAISEKLSFKQSLTVFKHPIAILWLLEEMALGVPLNSINNWLPQIVAAMGFSSVNTNLMTVAPAISGAIWLLVFAFISDFLKNRGIVLIAAISTTMIGFIVYGSIDIMNHIGVSYFACFLMTAGAAASSVLTSTWYNNNTPNESRRAVFTSVGVPLANVMGLVSANIFRPQDAPKYVPALGITAGFGGLGILLVASISVYMFFDNRRRDNAQGVKKTFADVSTKDLGEGPANPNFRWFL.

Residues 1-12 (MEKSISSISKAS) are compositionally biased toward low complexity. The segment at 1-20 (MEKSISSISKASMNSDEKLD) is disordered. The next 12 membrane-spanning stretches (helical) occupy residues 57–74 (FDFR…FNAL), 100–120 (IMIS…SYLY), 126–146 (ARIL…QAAV), 157–177 (WFLG…LTTF), 189–209 (IFYA…YGVF), 221–241 (YLFL…FLVL), 283–303 (VFKH…GVPL), 326–346 (LMTV…AFIS), 353–373 (GIVL…YGSI), 379–399 (IGVS…SSVL), 416–436 (VFTS…ANIF), and 445–465 (VPAL…VASI).

It belongs to the major facilitator superfamily. Allantoate permease family.

The protein resides in the endoplasmic reticulum. Its subcellular location is the membrane. This is an uncharacterized protein from Schizosaccharomyces pombe (strain 972 / ATCC 24843) (Fission yeast).